The primary structure comprises 616 residues: Replication protein A 70 kDa DNA-binding subunit (616 aa).

Residue methionine 1 is modified to N-acetylmethionine. Glycyl lysine isopeptide (Lys-Gly) (interchain with G-Cter in ubiquitin) cross-links involve residues lysine 22 and lysine 88. The disordered stretch occupies residues 121 to 154; sequence GLGQPQVAPPAPAASPAASSRPQPQNGSSGMGST. The segment covering 134-145 has biased composition (low complexity); that stretch reads ASPAASSRPQPQ. 2 positions are modified to N6-acetyllysine; alternate: lysine 163 and lysine 167. Residues lysine 163 and lysine 167 each participate in a glycyl lysine isopeptide (Lys-Gly) (interchain with G-Cter in ubiquitin); alternate cross-link. Threonine 180 is modified (phosphothreonine). A Glycyl lysine isopeptide (Lys-Gly) (interchain with G-Cter in ubiquitin) cross-link involves residue lysine 183. The residue at position 191 (threonine 191) is a Phosphothreonine. The OB DNA-binding region spans 197 to 281; it reads WTICARVTNK…VKNDYEMTFN (85 aa). Glycyl lysine isopeptide (Lys-Gly) (interchain with G-Cter in ubiquitin) cross-links involve residues lysine 220 and lysine 244. Lysine 259 is subject to N6-acetyllysine; alternate. Lysine 259 participates in a covalent cross-link: Glycyl lysine isopeptide (Lys-Gly) (interchain with G-Cter in ubiquitin); alternate. Glycyl lysine isopeptide (Lys-Gly) (interchain with G-Cter in ubiquitin) cross-links involve residues lysine 267 and lysine 331. The residue at position 384 (serine 384) is a Phosphoserine. Glycyl lysine isopeptide (Lys-Gly) (interchain with G-Cter in ubiquitin) cross-links involve residues lysine 410 and lysine 431. Residue lysine 449 forms a Glycyl lysine isopeptide (Lys-Gly) (interchain with G-Cter in SUMO) linkage. Lysine 458 participates in a covalent cross-link: Glycyl lysine isopeptide (Lys-Gly) (interchain with G-Cter in ubiquitin). The C4-type zinc finger occupies 481 to 503; the sequence is CPTQDCNKKVIDQQNGLYRCEKC. A Glycyl lysine isopeptide (Lys-Gly) (interchain with G-Cter in ubiquitin) cross-link involves residue lysine 553. A Glycyl lysine isopeptide (Lys-Gly) (interchain with G-Cter in SUMO) cross-link involves residue lysine 577.

This sequence belongs to the replication factor A protein 1 family. In terms of assembly, component of the canonical replication protein A complex (RPA), a heterotrimer composed of RPA1, RPA2 and RPA3. Also a component of the aRPA, the alternative replication protein A complex, a trimeric complex similar to the replication protein A complex/RPA but where RPA1 and RPA3 are associated with RPA4 instead of RPA2. The DNA-binding activity may reside exclusively on the RPA1 subunit. Interacts with PRPF19; the PRP19-CDC5L complex is recruited to the sites of DNA repair where it ubiquitinates the replication protein A complex (RPA). Interacts with RIPK1. Interacts with the polymerase alpha subunit POLA1/p180; this interaction stabilizes the replicative complex and reduces the misincorporation rate of DNA polymerase alpha by acting as a fidelity clamp. Interacts with RAD51 and SENP6 to regulate DNA repair. Interacts with HELB; this interaction promotes HELB recruitment to chromatin following DNA damage. Interacts with PRIMPOL; leading to recruit PRIMPOL on chromatin and stimulate its DNA primase activity. Interacts with XPA; the interaction is direct and associates XPA with the RPA complex. Interacts with ETAA1; the interaction is direct and promotes ETAA1 recruitment at stalled replication forks. Interacts with RPA1; this interaction associates HROB with the RPA complex. Interacts (when poly-ADP-ribosylated) with HTATSF1. Interacts with BRIP1/FANCJ via this RPA1 subunit; following DNA damage they colocalize in foci in the nucleus. DNA damage-induced 'Lys-63'-linked polyubiquitination by PRPF19 mediates ATRIP recruitment to the RPA complex at sites of DNA damage and activation of ATR. Ubiquitinated by RFWD3 at stalled replication forks in response to DNA damage: ubiquitination by RFWD3 does not lead to degradation by the proteasome and promotes removal of the RPA complex from stalled replication forks, promoting homologous recombination. Post-translationally, sumoylated on lysine residues Lys-449 and Lys-577, with Lys-449 being the major site. Sumoylation promotes recruitment of RAD51 to the DNA damage foci to initiate DNA repair through homologous recombination. Desumoylated by SENP6. In terms of processing, poly-ADP-ribosylated by PARP1; promoting recruitment of HTATSF1.

The protein localises to the nucleus. It is found in the PML body. In terms of biological role, as part of the heterotrimeric replication protein A complex (RPA/RP-A), binds and stabilizes single-stranded DNA intermediates that form during DNA replication or upon DNA stress. It prevents their reannealing and in parallel, recruits and activates different proteins and complexes involved in DNA metabolism. Thereby, it plays an essential role both in DNA replication and the cellular response to DNA damage. In the cellular response to DNA damage, the RPA complex controls DNA repair and DNA damage checkpoint activation. Through recruitment of ATRIP activates the ATR kinase a master regulator of the DNA damage response. It is required for the recruitment of the DNA double-strand break repair factors RAD51 and RAD52 to chromatin in response to DNA damage. Also recruits to sites of DNA damage proteins like XPA and XPG that are involved in nucleotide excision repair and is required for this mechanism of DNA repair. Also plays a role in base excision repair (BER) probably through interaction with UNG. Also recruits SMARCAL1/HARP, which is involved in replication fork restart, to sites of DNA damage. Plays a role in telomere maintenance. As part of the alternative replication protein A complex, aRPA, binds single-stranded DNA and probably plays a role in DNA repair. Compared to the RPA2-containing, canonical RPA complex, may not support chromosomal DNA replication and cell cycle progression through S-phase. The aRPA may not promote efficient priming by DNA polymerase alpha but could support DNA synthesis by polymerase delta in presence of PCNA and replication factor C (RFC), the dual incision/excision reaction of nucleotide excision repair and RAD51-dependent strand exchange. RPA stimulates 5'-3' helicase activity of the BRIP1/FANCJ. The sequence is that of Replication protein A 70 kDa DNA-binding subunit (RPA1) from Homo sapiens (Human).